We begin with the raw amino-acid sequence, 394 residues long: Queuine tRNA-ribosyltransferase accessory subunit 2 (394 aa).

Residues Cys-336, Cys-338, Cys-341, and His-367 each contribute to the Zn(2+) site.

It belongs to the queuine tRNA-ribosyltransferase family. QTRT2 subfamily. As to quaternary structure, heterodimer of a catalytic subunit and an accessory subunit. Zn(2+) serves as cofactor.

The protein resides in the cytoplasm. In terms of biological role, non-catalytic subunit of the queuine tRNA-ribosyltransferase (TGT) that catalyzes the base-exchange of a guanine (G) residue with queuine (Q) at position 34 (anticodon wobble position) in tRNAs with GU(N) anticodons (tRNA-Asp, -Asn, -His and -Tyr), resulting in the hypermodified nucleoside queuosine (7-(((4,5-cis-dihydroxy-2-cyclopenten-1-yl)amino)methyl)-7-deazaguanosine). The protein is Queuine tRNA-ribosyltransferase accessory subunit 2 of Ixodes scapularis (Black-legged tick).